The sequence spans 203 residues: Holliday junction branch migration complex subunit RuvA (203 aa).

The segment at 1-64 is domain I; sequence MIGRLRGIIL…EDAQLLYGFN (64 aa). The segment at 65–142 is domain II; it reads NKQERTLFKE…KGLHGDLFTP (78 aa). The flexible linker stretch occupies residues 143 to 154; sequence AVDLVLTSPASP. Residues 155–203 are domain III; that stretch reads GSEDAEQEAVAALVALGYKPQEASRMVSKIARPDASSETLIRDALRAAL.

Belongs to the RuvA family. Homotetramer. Forms an RuvA(8)-RuvB(12)-Holliday junction (HJ) complex. HJ DNA is sandwiched between 2 RuvA tetramers; dsDNA enters through RuvA and exits via RuvB. An RuvB hexamer assembles on each DNA strand where it exits the tetramer. Each RuvB hexamer is contacted by two RuvA subunits (via domain III) on 2 adjacent RuvB subunits; this complex drives branch migration. In the full resolvosome a probable DNA-RuvA(4)-RuvB(12)-RuvC(2) complex forms which resolves the HJ.

The protein resides in the cytoplasm. In terms of biological role, the RuvA-RuvB-RuvC complex processes Holliday junction (HJ) DNA during genetic recombination and DNA repair, while the RuvA-RuvB complex plays an important role in the rescue of blocked DNA replication forks via replication fork reversal (RFR). RuvA specifically binds to HJ cruciform DNA, conferring on it an open structure. The RuvB hexamer acts as an ATP-dependent pump, pulling dsDNA into and through the RuvAB complex. HJ branch migration allows RuvC to scan DNA until it finds its consensus sequence, where it cleaves and resolves the cruciform DNA. In Salmonella schwarzengrund (strain CVM19633), this protein is Holliday junction branch migration complex subunit RuvA.